Reading from the N-terminus, the 258-residue chain is UPF0246 protein MS0374 (258 aa).

The protein belongs to the UPF0246 family.

In Mannheimia succiniciproducens (strain KCTC 0769BP / MBEL55E), this protein is UPF0246 protein MS0374.